Reading from the N-terminus, the 956-residue chain is MAM domain-containing glycosylphosphatidylinositol anchor protein 1 (956 aa).

Residues 1 to 18 form the signal peptide; it reads MEVTCLLLLALIPFHCRG. 2 consecutive Ig-like domains span residues 24–123 and 132–230; these read PAQA…KSIR and PVLT…KAIT. N42 is a glycosylation site (N-linked (GlcNAc...) asparagine). 2 disulfides stabilise this stretch: C60–C108 and C157–C214. N-linked (GlcNAc...) asparagine glycosylation is found at N235, N247, N257, and N307. Ig-like domains are found at residues 240-323, 338-432, 440-532, and 539-650; these read PALK…KTVN, PDMI…IEVN, PTIS…AQVQ, and PEVE…PTRS. Disulfide bonds link C262-C308 and C357-C415. N-linked (GlcNAc...) asparagine glycosylation occurs at N432. Intrachain disulfides connect C463/C514 and C560/C616. Positions 627–744 constitute a Fibronectin type-III domain; sequence CLFQVSAKAY…SRIIHYTEPI (118 aa). The 168-residue stretch at 752–919 folds into the MAM domain; the sequence is NTCHFEDEKI…VTLKKGECPR (168 aa). The span at 780–789 shows a compositional bias: polar residues; it reads LTQNPKRSPN. The interval 780-799 is disordered; the sequence is LTQNPKRSPNTGPPTDISGT. The GPI-anchor amidated serine moiety is linked to residue S933. Residues 934–956 constitute a propeptide, removed in mature form; it reads GAPRLSSLQLWGSMAIFLLALQR.

In terms of assembly, interacts heterophilically through its MAM domain with proteins in axon-rich regions and through its Ig-like domains with proteins in differentiating muscle. Interacts (through the Ig-like domains) with NLGN2. Expressed by neurons in layers 2 and 3 of the cortex during their migration and settling in the cortical plate. Also found in layers 4 and 6a. From 9.5 dpc-13.5 dpc, detected in the marginal zone of the developing cortex. At 16.5 dpc, modest expression is found in the intermediate zone. At postnatal day 1, evident in the superficial cortical plate. By postnatal day 7, expression is limited to layers 2 and 3 throughout most of the cortex.

Its subcellular location is the cell membrane. Required for radial migration of cortical neurons in the superficial layer of the neocortex. Plays a role in the formation or maintenance of inhibitory synapses. May function by inhibiting the activity of NLGN2. This is MAM domain-containing glycosylphosphatidylinositol anchor protein 1 from Mus musculus (Mouse).